Consider the following 372-residue polypeptide: N-methyl-L-tryptophan oxidase (372 aa).

FAD is bound at residue 4-34 (DLIIIGSGSVGAAAGYYATRAGLNVLMTDAH). Cysteine 308 is subject to S-8alpha-FAD cysteine.

This sequence belongs to the MSOX/MTOX family. MTOX subfamily. As to quaternary structure, monomer. FAD serves as cofactor.

It catalyses the reaction N(alpha)-methyl-L-tryptophan + O2 + H2O = L-tryptophan + formaldehyde + H2O2. Its function is as follows. Catalyzes the oxidative demethylation of N-methyl-L-tryptophan. The protein is N-methyl-L-tryptophan oxidase of Escherichia coli O1:K1 / APEC.